Here is a 1235-residue protein sequence, read N- to C-terminus: MASPPDTDGFSDVRKVGYLRKPKSMHKRFFVLRAASEAGGPARLEYYENEKKWRHKSSAPKRSIPLESCFNINKRADSKNKHLVALYTRDEHFAIAADSEAEQDSWYQALLQLHNRAKAHHDGAGGGCGGSCSGSSGVGEAGEDLSYDTGPGPAFKEVWQVILKPKGLGQTKNLIGIYRLCLTSKTISFVKLNSEAAAVVLQLMNIRRCGHSENFFFIEVGRSAVTGPGEFWMQVDDSVVAQNMHETILEAMRAMSDEFRPRTKSQSSSSCSNPISVPLRRHHLNNPPPSQVGLTRRSRTESITATSPASMVGGKPGSFRVRASSDGEGTMSRPASVDGSPVSPSTNRTHAHRHRGSSRLHPPLNHSRSIPMPSSRCSPSATSPVSLSSSSTSGHGSTSDCLFPRRSSASVSGSPSDGGFISSDEYGSSPCDFRSSFRSVTPDSLGHTPPARGEEELSNYICMGGKGASTLTAPNGHYILSRGGNGHRYIPGATMGTSPALTGDEAAGAADLDNRFRKRTHSAGTSPTISHQKTPSQSSVVSIEEYTEMMPAAYPPGGGSGGRLPGYRHSAFVPTHSYPEEGLEMHHLERRGGHHRPDSSNLHTDDGYMPMSPGVAPVPSNRKGNGDYMPMSPKSVSAPQQIINPIRRHPQRVDPNGYMMMSPSGSCSPDIGGGSCSSSSISAAPSGSSYGKPWTNGVGGHHTHALPHAKPPVESGGGKLLPCTGDYMNMSPVGDSNTSSPSECYYGPEDPQHKPVLSYYSLPRSFKHTQRPGEPEEGARHQHLRLSSSSGRLRYTATAEDSSSSTSSDSLGGGYCGARPESSVTHPHHHALQPHLPRKVDTAAQTNSRLARPTRLSLGDPKASTLPRVREQQQQQQQQQQSSLHPPEPKSPGEYVNIEFGSGQPGYLAGPATSRSSPSVRCLPQLHPAPREETGSEEYMNMDLGPGRRATWQESGGVELGRVGPAPPGAASICRPTRSVPNSRGDYMTMQIGCPRQSYVDTSPVAPVSYADMRTGIAAEKVSLPRTTGAAPPPSSTASASASVTPQGAAEQAAHSSLLGGPQGPGGMSAFTRVNLSPNHNQSAKVIRADTQGCRRRHSSETFSAPTRAANTVSFGAGAAGGGSGGGSEDVKRHSSASFENVWLRPGDLGGASKESAPGCGAAGGLEKSLNYIDLDLVKDVKQHPQDCPSQQQSLPPPPPHQPLGSNEGSSPRRSSEDLSTYASINFQKQPEDRQ.

Ser3 is subject to Phosphoserine. Residues 3–133 (SPPDTDGFSD…AGGGCGGSCS (131 aa)) form a mediates interaction with PHIP region. The PH domain occupies 12 to 115 (DVRKVGYLRK…WYQALLQLHN (104 aa)). Ser99 bears the Phosphoserine; by CK2 mark. An IRS-type PTB domain is found at 155–259 (FKEVWQVILK…EAMRAMSDEF (105 aa)). A disordered region spans residues 258 to 425 (EFRPRTKSQS…SDGGFISSDE (168 aa)). Phosphoserine; by RPS6KB1 is present on residues Ser265 and Ser302. Residues 265–276 (SQSSSSCSNPIS) show a composition bias toward low complexity. Position 307 is a phosphoserine; by IKKB, MAPK8 and RPS6KB1 (Ser307). Ser318, Ser325, Ser340, and Ser343 each carry phosphoserine. Residues 349-358 (THAHRHRGSS) show a composition bias toward basic residues. 2 stretches are compositionally biased toward low complexity: residues 378-399 (SPSA…GSTS) and 407-419 (SSAS…SDGG). A Phosphoserine modification is found at Ser414. Residues Thr441 and Thr448 each carry the phosphothreonine modification. Tyr460 carries the phosphotyrosine; by INSR modification. Positions 460-463 (YICM) match the YXXM motif 1 motif. Position 502 is a phosphothreonine; by CK2 (Thr502). The interval 520–539 (THSAGTSPTISHQKTPSQSS) is disordered. Ser522 is subject to Phosphoserine; by RPS6KB1. The segment covering 522-539 (SAGTSPTISHQKTPSQSS) has biased composition (polar residues). Short sequence motifs (YXXM motif) lie at residues 546–549 (YTEM) and 608–611 (YMPM). Tyr608 is subject to Phosphotyrosine; by INSR. Ser612 is subject to Phosphoserine. Phosphotyrosine; by INSR is present on Tyr628. A YXXM motif 4 motif is present at residues 628 to 631 (YMPM). Ser632 is subject to Phosphoserine; by RPS6KB1 and ROCK2. Tyr658 is subject to Phosphotyrosine. The YXXM motif 5 motif lies at 658–661 (YMMM). The span at 669–689 (PDIGGGSCSSSSISAAPSGSS) shows a compositional bias: low complexity. Residues 669 to 720 (PDIGGGSCSSSSISAAPSGSSYGKPWTNGVGGHHTHALPHAKPPVESGGGKL) form a disordered region. The short motif at 727–730 (YMNM) is the YXXM motif 6 element. A disordered region spans residues 766–921 (FKHTQRPGEP…ATSRSSPSVR (156 aa)). The segment covering 771–780 (RPGEPEEGAR) has biased composition (basic and acidic residues). Low complexity-rich tracts occupy residues 785–794 (RLSSSSGRLR), 801–810 (DSSSSTSSDS), and 872–881 (QQQQQQQQQQ). Ser789 bears the Phosphoserine; by AMPK and SIK2 mark. Phosphoserine is present on Ser891. A phosphotyrosine; by INSR mark is found at Tyr895, Tyr939, and Tyr987. A GRB2-binding region spans residues 895–897 (YVN). 3 short sequence motifs (YXXM motif) span residues 939-942 (YMNM), 987-990 (YMTM), and 1010-1013 (YADM). Residues 1024–1165 (LPRTTGAAPP…SAPGCGAAGG (142 aa)) are disordered. Low complexity predominate over residues 1025-1046 (PRTTGAAPPPSSTASASASVTP). Over residues 1072–1084 (TRVNLSPNHNQSA) the composition is skewed to polar residues. Phosphoserine is present on Ser1099. Ser1100 is modified (phosphoserine; by RPS6KB1). Over residues 1101 to 1114 (ETFSAPTRAANTVS) the composition is skewed to polar residues. The span at 1118-1128 (GAAGGGSGGGS) shows a compositional bias: gly residues. The residue at position 1172 (Tyr1172) is a Phosphotyrosine; by INSR. A disordered region spans residues 1177 to 1235 (LVKDVKQHPQDCPSQQQSLPPPPPHQPLGSNEGSSPRRSSEDLSTYASINFQKQPEDRQ). Residue Lys1179 forms a Glycyl lysine isopeptide (Lys-Gly) (interchain with G-Cter in ubiquitin) linkage. Over residues 1204–1229 (LGSNEGSSPRRSSEDLSTYASINFQK) the composition is skewed to polar residues. The residue at position 1222 (Tyr1222) is a Phosphotyrosine; by INSR.

In terms of assembly, interacts with SOCS7. Interacts (via IRS-type PTB domain) with IGF1R and INSR (via the tyrosine-phosphorylated NPXY motif). Interacts with UBTF, FER and PIK3CA. Interacts (via phosphorylated YXXM motifs) with PIK3R1. Interacts with ROCK1. Interacts (via PH domain) with PHIP. Interacts with GRB2. Interacts with ALK. Interacts with EIF2AK2/PKR. Interacts with GKAP1. Interacts with DGKZ in the absence of insulin; insulin stimulation decreases this interaction. Found in a ternary complex with DGKZ and PIP5K1A in the absence of insulin stimulation. Interacts with SQSTM1; the interaction is disrupted by the presence of tensin TNS2. Interacts with NCK1 (via SH2 domain). Interacts with NCK2 (via SH3 domain). Interacts with SH2B1; this interaction enhances leptin-induced activation of the PI3-kinase pathway. Interacts with DVL2; this interaction promotes the Wnt/beta-catenin signaling pathway. Interacts with JAK1. Post-translationally, serine phosphorylation of IRS1 is a mechanism for insulin resistance. Ser-307 phosphorylation inhibits insulin action through disruption of IRS1 interaction with the insulin receptor, and Ser-789 phosphorylation is increased in the liver of insulin-resistant rats. Phosphorylation of Tyr-895 is required for GRB2-binding. Phosphorylated by ALK. Phosphorylated at Ser-265, Ser-302, Ser-632 and Ser-1100 by RPS6KB1; phosphorylation induces accelerated degradation of IRS1. Phosphorylated on tyrosine residues in response to insulin. In skeletal muscles, dephosphorylated on Tyr-608 by TNS2 under anabolic conditions; dephosphorylation results in the proteasomal degradation of IRS1. Ubiquitinated by the Cul7-RING(FBXW8) complex in a mTOR-dependent manner, leading to its degradation: the Cul7-RING(FBXW8) complex recognizes and binds IRS1 previously phosphorylated by S6 kinase (RPS6KB1 or RPS6KB2). Ubiquitinated by TRAF4 through 'Lys-29' linkage; this ubiquitination regulates the interaction of IRS1 with IGFR and IRS1 tyrosine phosphorylation upon IGF1 stimulation. In terms of processing, S-nitrosylation at by BLVRB inhibits its activity.

It is found in the cytoplasm. The protein localises to the nucleus. Its function is as follows. Signaling adapter protein that participates in the signal transduction from two prominent receptor tyrosine kinases, insulin receptor/INSR and insulin-like growth factor I receptor/IGF1R. Plays therefore an important role in development, growth, glucose homeostasis as well as lipid metabolism. Upon phosphorylation by the insulin receptor, functions as a signaling scaffold that propagates insulin action through binding to SH2 domain-containing proteins including the p85 regulatory subunit of PI3K, NCK1, NCK2, GRB2 or SHP2. Recruitment of GRB2 leads to the activation of the guanine nucleotide exchange factor SOS1 which in turn triggers the Ras/Raf/MEK/MAPK signaling cascade. Activation of the PI3K/AKT pathway is responsible for most of insulin metabolic effects in the cell, and the Ras/Raf/MEK/MAPK is involved in the regulation of gene expression and in cooperation with the PI3K pathway regulates cell growth and differentiation. Acts a positive regulator of the Wnt/beta-catenin signaling pathway through suppression of DVL2 autophagy-mediated degradation leading to cell proliferation. This Rattus norvegicus (Rat) protein is Insulin receptor substrate 1 (Irs1).